The sequence spans 225 residues: 2-C-methyl-D-erythritol 4-phosphate cytidylyltransferase (225 aa).

This sequence belongs to the IspD/TarI cytidylyltransferase family. IspD subfamily.

The catalysed reaction is 2-C-methyl-D-erythritol 4-phosphate + CTP + H(+) = 4-CDP-2-C-methyl-D-erythritol + diphosphate. It participates in isoprenoid biosynthesis; isopentenyl diphosphate biosynthesis via DXP pathway; isopentenyl diphosphate from 1-deoxy-D-xylulose 5-phosphate: step 2/6. Catalyzes the formation of 4-diphosphocytidyl-2-C-methyl-D-erythritol from CTP and 2-C-methyl-D-erythritol 4-phosphate (MEP). The protein is 2-C-methyl-D-erythritol 4-phosphate cytidylyltransferase of Haemophilus influenzae (strain PittEE).